The chain runs to 270 residues: Elongation factor Ts (270 aa).

An involved in Mg(2+) ion dislocation from EF-Tu region spans residues 81–84 (TDFV).

Belongs to the EF-Ts family.

It is found in the cytoplasm. Functionally, associates with the EF-Tu.GDP complex and induces the exchange of GDP to GTP. It remains bound to the aminoacyl-tRNA.EF-Tu.GTP complex up to the GTP hydrolysis stage on the ribosome. In Wigglesworthia glossinidia brevipalpis, this protein is Elongation factor Ts.